Consider the following 273-residue polypeptide: Undecaprenyl-diphosphatase (273 aa).

The next 7 membrane-spanning stretches (helical) occupy residues 54–74 (LGSI…LIGI), 90–110 (LTLI…LVFH), 116–136 (LFNP…LIAA), 156–178 (QAFM…SGAT), 190–210 (YAAS…ATVL), 222–242 (ADIP…LIAI), and 252–272 (ISFI…YVVF).

The protein belongs to the UppP family.

It localises to the cell inner membrane. The catalysed reaction is di-trans,octa-cis-undecaprenyl diphosphate + H2O = di-trans,octa-cis-undecaprenyl phosphate + phosphate + H(+). In terms of biological role, catalyzes the dephosphorylation of undecaprenyl diphosphate (UPP). Confers resistance to bacitracin. The sequence is that of Undecaprenyl-diphosphatase from Salmonella paratyphi A (strain ATCC 9150 / SARB42).